The chain runs to 151 residues: Small ribosomal subunit protein uS15y (151 aa).

It belongs to the universal ribosomal protein uS15 family.

The polypeptide is Small ribosomal subunit protein uS15y (Oryza sativa subsp. japonica (Rice)).